Here is a 269-residue protein sequence, read N- to C-terminus: Protein MGF 360-15R (269 aa).

The protein belongs to the asfivirus MGF 360 family.

Functionally, plays a role in virus cell tropism, and may be required for efficient virus replication in macrophages. This chain is Protein MGF 360-15R, found in African swine fever virus (isolate Pig/Kenya/KEN-50/1950) (ASFV).